Reading from the N-terminus, the 453-residue chain is GTPase Der (453 aa).

2 consecutive EngA-type G domains span residues 4 to 169 and 177 to 352; these read PIVA…SETP and IKVA…RQFE. Residues 10-17, 57-61, 120-123, 183-190, 230-234, and 295-298 contribute to the GTP site; these read GRPNVGKS, DTGGL, NKCE, DTAGI, and NKWD. The 86-residue stretch at 353-438 folds into the KH-like domain; the sequence is QRVTTSVINE…PIRLLWRGKK (86 aa).

The protein belongs to the TRAFAC class TrmE-Era-EngA-EngB-Septin-like GTPase superfamily. EngA (Der) GTPase family. Associates with the 50S ribosomal subunit.

Functionally, GTPase that plays an essential role in the late steps of ribosome biogenesis. In Acaryochloris marina (strain MBIC 11017), this protein is GTPase Der.